Reading from the N-terminus, the 98-residue chain is MANIKSAIKRVQIAERNRLRNKAYKSAVKTLVKHCFTAFDAYAADPNETARQAVNERLSAAYSKIDKAVKRGVLHANTGARKKARLAKAFHLKVDPQA.

Belongs to the bacterial ribosomal protein bS20 family.

Its function is as follows. Binds directly to 16S ribosomal RNA. The sequence is that of Small ribosomal subunit protein bS20 from Synechococcus elongatus (strain ATCC 33912 / PCC 7942 / FACHB-805) (Anacystis nidulans R2).